A 158-amino-acid chain; its full sequence is MSKVVNLVRPVVESIIDEHGDMLVNMEYIKEKSQNYLRIYVDREPNGIDIDEIAVLSELISEKLDTLDPDPLPDPYVLELSSPGAERPIKTKADWEKALNDYIHVGLYQKIEDKKMYEGTLKSYNDDEIILEVKDKTRRKTLTVPRKLIANIRFAIEF.

The protein belongs to the RimP family.

The protein resides in the cytoplasm. Its function is as follows. Required for maturation of 30S ribosomal subunits. The protein is Ribosome maturation factor RimP of Lactobacillus acidophilus (strain ATCC 700396 / NCK56 / N2 / NCFM).